The chain runs to 328 residues: Flotillin-like protein FloA (328 aa).

Transmembrane regions (helical) follow at residues 9–29 (LLIT…VPVG) and 30–50 (LWIS…IGMR).

Belongs to the flotillin-like FloA family. In terms of assembly, homooligomerizes.

The protein resides in the cell membrane. The protein localises to the membrane raft. In terms of biological role, found in functional membrane microdomains (FMM) that may be equivalent to eukaryotic membrane rafts. FMMs are highly dynamic and increase in number as cells age. Flotillins are thought to be important factors in membrane fluidity. The polypeptide is Flotillin-like protein FloA (Exiguobacterium sp. (strain ATCC BAA-1283 / AT1b)).